The following is a 71-amino-acid chain: Small ribosomal subunit protein bS21 (71 aa).

Belongs to the bacterial ribosomal protein bS21 family.

This is Small ribosomal subunit protein bS21 from Chromohalobacter salexigens (strain ATCC BAA-138 / DSM 3043 / CIP 106854 / NCIMB 13768 / 1H11).